The primary structure comprises 244 residues: Phosphoadenosine 5'-phosphosulfate reductase (244 aa).

Cys-239 acts as the Nucleophile; cysteine thiosulfonate intermediate in catalysis.

This sequence belongs to the PAPS reductase family. CysH subfamily.

It localises to the cytoplasm. The catalysed reaction is [thioredoxin]-disulfide + sulfite + adenosine 3',5'-bisphosphate + 2 H(+) = [thioredoxin]-dithiol + 3'-phosphoadenylyl sulfate. It participates in sulfur metabolism; hydrogen sulfide biosynthesis; sulfite from sulfate: step 3/3. Catalyzes the formation of sulfite from phosphoadenosine 5'-phosphosulfate (PAPS) using thioredoxin as an electron donor. The protein is Phosphoadenosine 5'-phosphosulfate reductase of Salmonella typhi.